A 234-amino-acid polypeptide reads, in one-letter code: Orotidine 5'-phosphate decarboxylase (234 aa).

Residues Asp-11, Lys-33, 60–69 (DLKFHDIPNT), Thr-120, Arg-181, Gln-190, Gly-210, and Arg-211 contribute to the substrate site. Lys-62 acts as the Proton donor in catalysis.

Belongs to the OMP decarboxylase family. Type 1 subfamily. Homodimer.

It carries out the reaction orotidine 5'-phosphate + H(+) = UMP + CO2. Its pathway is pyrimidine metabolism; UMP biosynthesis via de novo pathway; UMP from orotate: step 2/2. Catalyzes the decarboxylation of orotidine 5'-monophosphate (OMP) to uridine 5'-monophosphate (UMP). This is Orotidine 5'-phosphate decarboxylase from Shewanella sediminis (strain HAW-EB3).